The following is an 85-amino-acid chain: Small ribosomal subunit protein bS18A (85 aa).

It belongs to the bacterial ribosomal protein bS18 family. As to quaternary structure, part of the 30S ribosomal subunit. Forms a tight heterodimer with protein bS6.

Binds as a heterodimer with protein bS6 to the central domain of the 16S rRNA, where it helps stabilize the platform of the 30S subunit. This is Small ribosomal subunit protein bS18A from Mycolicibacterium smegmatis (strain ATCC 700084 / mc(2)155) (Mycobacterium smegmatis).